A 113-amino-acid polypeptide reads, in one-letter code: UPF0482 protein CKO_01577 (113 aa).

Positions 1–28 (MNNTLSKRLCLTAMLALGAVVYTTSAFA) are cleaved as a signal peptide. The segment at 44 to 67 (RQHAAMEKEQWNDTRSLRQKVNTR) is disordered. Residues 47–59 (AAMEKEQWNDTRS) show a composition bias toward basic and acidic residues.

Belongs to the UPF0482 family.

In Citrobacter koseri (strain ATCC BAA-895 / CDC 4225-83 / SGSC4696), this protein is UPF0482 protein CKO_01577.